Consider the following 125-residue polypeptide: UPF0593 mitochondrial protein C806.05 (125 aa).

The protein belongs to the UPF0593 family.

Its subcellular location is the mitochondrion. The sequence is that of UPF0593 mitochondrial protein C806.05 from Schizosaccharomyces pombe (strain 972 / ATCC 24843) (Fission yeast).